A 775-amino-acid polypeptide reads, in one-letter code: E3 ubiquitin-protein ligase UHRF1 (775 aa).

Residues 1 to 77 (MWIQVRTMDG…IVQLLVRQIP (77 aa)) enclose the Ubiquitin-like domain. Positions 81-128 (PTKDKECGISDADSGCGSGQGESDKNSSCGEGATDVDGQPAGINSENV) are disordered. 2 tudor-like regions span residues 131 to 207 (SLYK…LRAR) and 214 to 283 (DLKV…IEEP). The linker stretch occupies residues 293–301 (PQKRQNGPE). The PHD-type zinc finger occupies 299–366 (GPECKHCKDN…DWYCPDCRND (68 aa)). Histone H3R2me0 binding stretches follow at residues 333 to 337 (CDECD) and 353 to 355 (PQD). The 164-residue stretch at 419-582 (GPIPGVPVGT…FLVWRYLLRR (164 aa)) folds into the YDG domain. A required to promote base flipping region spans residues 445–446 (HV). DNA-binding positions include 463–464 (AG) and aspartate 469. Required for formation of a 5-methylcytosine-binding pocket stretches follow at residues 466–469 (YEDD) and 478–481 (YTGS). Over residues 616-628 (ASKEREKENKTED) the composition is skewed to basic and acidic residues. The disordered stretch occupies residues 616 to 655 (ASKEREKENKTEDELSESPSKGKRKRNSAGSGLSDAKSTP). An RING-type zinc finger spans residues 706-745 (CICCQEVVYEPITTECHHNICKGCLDRSFKALVHNCPACR).

It localises to the nucleus. It carries out the reaction S-ubiquitinyl-[E2 ubiquitin-conjugating enzyme]-L-cysteine + [acceptor protein]-L-lysine = [E2 ubiquitin-conjugating enzyme]-L-cysteine + N(6)-ubiquitinyl-[acceptor protein]-L-lysine.. It participates in protein modification; protein ubiquitination. Functionally, multidomain protein that acts as a key epigenetic regulator by bridging DNA methylation and chromatin modification. Specifically recognizes and binds hemimethylated DNA at replication forks via its YDG domain and recruits dnmt1 methyltransferase to ensure faithful propagation of the DNA methylation patterns through DNA replication. In addition to its role in maintenance of DNA methylation, also plays a key role in chromatin modification: through its tudor-like regions and PHD-type zinc fingers, specifically recognizes and binds histone H3 trimethylated at 'Lys-9' (H3K9me3) and unmethylated at 'Arg-2' (H3R2me0), respectively, and recruits chromatin proteins. Enriched in pericentric heterochromatin where it recruits different chromatin modifiers required for this chromatin replication. Also localizes to euchromatic regions where it negatively regulates transcription possibly by impacting DNA methylation and histone modifications. Has E3 ubiquitin-protein ligase activity by mediating the ubiquitination of target proteins. However, it is still unclear how E3 ubiquitin-protein ligase activity is related to its role in chromatin in vivo. This chain is E3 ubiquitin-protein ligase UHRF1 (uhrf1), found in Xenopus tropicalis (Western clawed frog).